The following is a 356-amino-acid chain: GTPase Obg (356 aa).

The Obg domain occupies 1–158 (MFIDSVKITL…RLVRLELKLI (158 aa)). The OBG-type G domain occupies 159 to 339 (ADVGLVGFPN…LKFMLLEEIK (181 aa)). Residues 165 to 172 (GFPNVGKS), 190 to 194 (FTTLT), 212 to 215 (DIPG), 280 to 283 (SKSD), and 320 to 322 (SSL) contribute to the GTP site. The Mg(2+) site is built by S172 and T192.

Belongs to the TRAFAC class OBG-HflX-like GTPase superfamily. OBG GTPase family. In terms of assembly, monomer. Mg(2+) serves as cofactor.

It localises to the cytoplasm. An essential GTPase which binds GTP, GDP and possibly (p)ppGpp with moderate affinity, with high nucleotide exchange rates and a fairly low GTP hydrolysis rate. Plays a role in control of the cell cycle, stress response, ribosome biogenesis and in those bacteria that undergo differentiation, in morphogenesis control. This chain is GTPase Obg, found in Campylobacter jejuni subsp. jejuni serotype O:23/36 (strain 81-176).